A 431-amino-acid chain; its full sequence is Cleavage stimulation factor subunit 1 (431 aa).

The hydrophobic stretch occupies residues L14 to I35. WD repeat units lie at residues S106–A145, D171–A210, Q215–S254, Q260–E301, A303–R343, and G395–T430.

In terms of assembly, homodimer. The CSTF complex is composed of CSTF1 (50 kDa subunit), CSTF2 (64 kDa subunit) and CSTF3 (77 kDa subunit). Interacts (via repeats WD) directly with CSTF3. Interacts (via repeat WD6) with BARD1. Interacts with ERCC6. In terms of processing, the N-terminus is blocked.

It localises to the nucleus. In terms of biological role, one of the multiple factors required for polyadenylation and 3'-end cleavage of mammalian pre-mRNAs. May be responsible for the interaction of CSTF with other factors to form a stable complex on the pre-mRNA. The sequence is that of Cleavage stimulation factor subunit 1 (CSTF1) from Homo sapiens (Human).